The chain runs to 693 residues: Phosphoribosylformylglycinamidine synthase subunit PurL (693 aa).

Residue histidine 34 is part of the active site. ATP-binding residues include tyrosine 37 and lysine 76. Residue glutamate 78 participates in Mg(2+) binding. Residues 79 to 82 (SHNH) and arginine 101 contribute to the substrate site. Histidine 80 functions as the Proton acceptor in the catalytic mechanism. Aspartate 102 is a binding site for Mg(2+). Residue glutamine 222 participates in substrate binding. Aspartate 248 lines the Mg(2+) pocket. Position 292 to 294 (292 to 294 (ETQ)) interacts with substrate. Aspartate 470 and glycine 507 together coordinate ATP. Serine 510 is a substrate binding site.

It belongs to the FGAMS family. In terms of assembly, monomer. Part of the FGAM synthase complex composed of 1 PurL, 1 PurQ and 2 PurS subunits.

It is found in the cytoplasm. It carries out the reaction N(2)-formyl-N(1)-(5-phospho-beta-D-ribosyl)glycinamide + L-glutamine + ATP + H2O = 2-formamido-N(1)-(5-O-phospho-beta-D-ribosyl)acetamidine + L-glutamate + ADP + phosphate + H(+). The protein operates within purine metabolism; IMP biosynthesis via de novo pathway; 5-amino-1-(5-phospho-D-ribosyl)imidazole from N(2)-formyl-N(1)-(5-phospho-D-ribosyl)glycinamide: step 1/2. Part of the phosphoribosylformylglycinamidine synthase complex involved in the purines biosynthetic pathway. Catalyzes the ATP-dependent conversion of formylglycinamide ribonucleotide (FGAR) and glutamine to yield formylglycinamidine ribonucleotide (FGAM) and glutamate. The FGAM synthase complex is composed of three subunits. PurQ produces an ammonia molecule by converting glutamine to glutamate. PurL transfers the ammonia molecule to FGAR to form FGAM in an ATP-dependent manner. PurS interacts with PurQ and PurL and is thought to assist in the transfer of the ammonia molecule from PurQ to PurL. The chain is Phosphoribosylformylglycinamidine synthase subunit PurL from Pyrobaculum calidifontis (strain DSM 21063 / JCM 11548 / VA1).